We begin with the raw amino-acid sequence, 1711 residues long: Protein chiffon (1711 aa).

Disordered stretches follow at residues 1–31 (MQPQ…AATP), 87–129 (KPEV…SRAD), and 244–307 (TKSK…IDSS). Residues 1–400 (MQPQSDKQSA…PALREKSKRI (400 aa)) form a sufficient for interaction with and activation of Cdc7 region. 2 stretches are compositionally biased toward low complexity: residues 10 to 30 (ASRL…TAAT) and 97 to 109 (TPGT…TPTS). 2 positions are modified to phosphoserine: serine 306 and serine 307. A DBF4-type zinc finger spans residues 307–356 (SEKQGGVCEICKLEYDILNIHLQSKDHELFAKNSDNFLALDTLIQSSADV). Zn(2+)-binding residues include cysteine 314, cysteine 317, histidine 327, and histidine 333. Acidic residues predominate over residues 365–378 (VESELDMDVDESLS). 11 disordered regions span residues 365-507 (VESE…DSPS), 531-647 (MFPR…KPQL), 733-771 (LDEE…REQR), 791-817 (TEVK…KVKQ), 908-945 (QDKG…YKNK), 1005-1025 (RSTS…CRNK), 1055-1157 (QRQD…RNQS), 1271-1290 (ESEG…PPTD), 1303-1329 (MGSA…RMSN), 1343-1370 (LKSN…ALPD), and 1383-1644 (LHPI…SKYA). Phosphoserine is present on residues serine 406, serine 407, serine 417, serine 432, and serine 435. The segment covering 429–439 (QGNSPGSLSEL) has biased composition (polar residues). The segment covering 445-454 (PTTAAATPTT) has biased composition (low complexity). Serine 467 carries the phosphoserine modification. The segment at residues 493–505 (PRGRGRPPNQVDS) is a DNA-binding region (a.T hook). Over residues 537–546 (VPTTRSSSEL) the composition is skewed to polar residues. Phosphoserine is present on residues serine 542, serine 543, and serine 544. The segment covering 549 to 560 (DVDRQTTSDVRG) has biased composition (basic and acidic residues). Residues 563–575 (SISSASLDTSTSE) are compositionally biased toward low complexity. Over residues 588–601 (IRKRAQAVGRRRKV) the composition is skewed to basic residues. A compositionally biased stretch (polar residues) spans 793–812 (VKTSPSKSRTKIQKPSSPTK). The span at 908–932 (QDKGEQIKLEDQKPAPKKEVKKEEE) shows a compositional bias: basic and acidic residues. Over residues 1006–1018 (STSSSSCSNSQRS) the composition is skewed to low complexity. At threonine 1081 the chain carries Phosphothreonine. Phosphoserine occurs at positions 1091 and 1092. Residues 1092–1101 (SPRTTRSQAA) show a composition bias toward polar residues. Positions 1398–1407 (TTTTTTTTTT) are enriched in low complexity. The sufficient for interaction with Gcn5 stretch occupies residues 1400-1695 (TTTTTTTTSA…NAWRRTQRRA (296 aa)). Over residues 1435-1445 (ADDKQNSREDA) the composition is skewed to basic and acidic residues. Acidic residues-rich tracts occupy residues 1453 to 1475 (DVDE…DETM) and 1483 to 1518 (QDVE…EEQD). 2 stretches are compositionally biased toward polar residues: residues 1536-1545 (ISVTTPPEDS) and 1556-1591 (HNGQ…SCIS).

As to quaternary structure, component of the Dbf4-dependent kinase (DDK) complex consisting of Cdc7 and the Dbf4 ortholog chif. Interacts with Cdc7; the interaction is direct. Interacts with CG5790. Component of the Chiffon histone acetyltransferase (CHAT) complex consisting of Ada3, Sgf29, Gcn5, chif/chiffon and Ada2b (Isoform A). Interacts (via C-terminus) with Gcn5; the interaction is direct but weak in the absence of other CHAT components. Post-translationally, may be proteolytically cleaved to produce a N-terminal 50 kDa product.

It localises to the nucleus. In terms of biological role, a bicistronic gene producing two proteins that are components of different complexes and have separate properties and functions. Full-length protein is proteolytically cleaved, producing a ~50kDa N-terminal product (Chiffon-A) that forms part of the DDK complex; it is unclear if the C-terminal proteolytic product is stable or functional. Alternative initiation from an internal ribosome entry site produces a C-terminal ~48kDa product (Chiffon-B or Isoform E) that forms part of the CHAT complex. Involved in regulation of gene expression during embryonic development. Functionally, regulatory component of the Dbf4-dependent kinase (DDK) complex. Required for the amplification stage, but not the preceding endoreplication stage of DNA replication in egg chamber follicle cells of the ovary. May be involved in initiation of DNA replication; activation of the chorion gene origins. May have a role in eye and thoracic bristle development. Required for female fertility; is not required for oogenesis but is required maternally for early embryo development. Its function is as follows. Component of the CHAT histone acetyltransferase complex, which predominantly acetylates histone H3. As part of the CHAT complex involved in acetylation of histone H3 on 'Lys-10' (H3K9ac), 'Lys-15' (H3K14ac) and 'Lys-19' (H3K18ac), but not 'Lys-25' (H3K24ac). May also regulate other histone acetyltransferase complexes. Essential for viability. Not required for early stages of embryonic development. May be involved in zygotic genome activation during embryogenesis. In Drosophila melanogaster (Fruit fly), this protein is Protein chiffon.